Reading from the N-terminus, the 204-residue chain is Large ribosomal subunit protein bL25 (204 aa).

This sequence belongs to the bacterial ribosomal protein bL25 family. CTC subfamily. Part of the 50S ribosomal subunit; part of the 5S rRNA/L5/L18/L25 subcomplex. Contacts the 5S rRNA. Binds to the 5S rRNA independently of L5 and L18.

This is one of the proteins that binds to the 5S RNA in the ribosome where it forms part of the central protuberance. This chain is Large ribosomal subunit protein bL25, found in Wolbachia sp. subsp. Brugia malayi (strain TRS).